The primary structure comprises 298 residues: tRNA pseudouridine synthase B (298 aa).

Residue aspartate 42 is the Nucleophile of the active site.

This sequence belongs to the pseudouridine synthase TruB family. Type 1 subfamily.

The enzyme catalyses uridine(55) in tRNA = pseudouridine(55) in tRNA. In terms of biological role, responsible for synthesis of pseudouridine from uracil-55 in the psi GC loop of transfer RNAs. The protein is tRNA pseudouridine synthase B of Mycobacterium tuberculosis (strain CDC 1551 / Oshkosh).